The primary structure comprises 42 residues: Photosystem I reaction center subunit IX (42 aa).

The helical transmembrane segment at 7-27 threads the bilayer; it reads YLSVAPVLSTLWFGALAGLLI.

Belongs to the PsaJ family.

The protein resides in the plastid. It is found in the chloroplast thylakoid membrane. In terms of biological role, may help in the organization of the PsaE and PsaF subunits. This chain is Photosystem I reaction center subunit IX, found in Platanus occidentalis (Sycamore).